We begin with the raw amino-acid sequence, 291 residues long: Urease accessory protein UreD (291 aa).

The protein belongs to the UreD family. UreD, UreF and UreG form a complex that acts as a GTP-hydrolysis-dependent molecular chaperone, activating the urease apoprotein by helping to assemble the nickel containing metallocenter of UreC. The UreE protein probably delivers the nickel.

Its subcellular location is the cytoplasm. Its function is as follows. Required for maturation of urease via the functional incorporation of the urease nickel metallocenter. This is Urease accessory protein UreD from Acinetobacter baumannii (strain ACICU).